A 250-amino-acid polypeptide reads, in one-letter code: Small ribosomal subunit protein uS2 (250 aa).

It belongs to the universal ribosomal protein uS2 family.

The polypeptide is Small ribosomal subunit protein uS2 (Marinobacter nauticus (strain ATCC 700491 / DSM 11845 / VT8) (Marinobacter aquaeolei)).